We begin with the raw amino-acid sequence, 452 residues long: Ribosome biogenesis protein YTM1 (452 aa).

Residues 17 to 98 are ubiquitin-like (UBL) domain; it reads IVSQPVVFTT…EETLEIEYIE (82 aa). 3 WD repeats span residues 110-148, 150-195, and 208-247; these read PHED…TASI, AHPA…NPMA, and LHTA…TDEV. The tract at residues 245 to 269 is disordered; that stretch reads DEVPEPALNERDRSKKRRRVEEGEV. Positions 252–269 are enriched in basic and acidic residues; the sequence is LNERDRSKKRRRVEEGEV. WD repeat units follow at residues 282-322, 325-364, 371-411, and 418-452; these read SHTA…CSHT, ASEK…TILT, MHPS…SAMA, and GSGQ…EQKV.

The protein belongs to the WD repeat WDR12/YTM1 family. As to quaternary structure, component of the NOP7 complex, composed of ERB1, NOP7 and YTM1. The complex is held together by ERB1, which interacts with NOP7 via its N-terminal domain and with YTM1 via a high-affinity interaction between the seven-bladed beta-propeller domains of the 2 proteins. The NOP7 complex associates with the 66S pre-ribosome. Interacts (via UBL domain) with MDN1 (via VWFA/MIDAS domain).

Its subcellular location is the nucleus. It is found in the nucleolus. It localises to the nucleoplasm. Its function is as follows. Component of the NOP7 complex, which is required for maturation of the 25S and 5.8S ribosomal RNAs and formation of the 60S ribosome. This chain is Ribosome biogenesis protein YTM1, found in Laccaria bicolor (strain S238N-H82 / ATCC MYA-4686) (Bicoloured deceiver).